The primary structure comprises 101 residues: Urease subunit gamma (101 aa).

The protein belongs to the urease gamma subunit family. Heterotrimer of UreA (gamma), UreB (beta) and UreC (alpha) subunits. Three heterotrimers associate to form the active enzyme.

The protein localises to the cytoplasm. The enzyme catalyses urea + 2 H2O + H(+) = hydrogencarbonate + 2 NH4(+). Its pathway is nitrogen metabolism; urea degradation; CO(2) and NH(3) from urea (urease route): step 1/1. This Ureaplasma urealyticum (Ureaplasma urealyticum biotype 2) protein is Urease subunit gamma.